Consider the following 300-residue polypeptide: Acetyl-coenzyme A carboxylase carboxyl transferase subunit beta 1 (300 aa).

Residues Met-26–Ala-294 form the CoA carboxyltransferase N-terminal domain. 4 residues coordinate Zn(2+): Cys-30, Cys-33, Cys-49, and Cys-51. The C4-type zinc-finger motif lies at Cys-30 to Cys-51.

The protein belongs to the AccD/PCCB family. As to quaternary structure, acetyl-CoA carboxylase is a heterohexamer composed of biotin carboxyl carrier protein (AccB), biotin carboxylase (AccC) and two subunits each of ACCase subunit alpha (AccA) and ACCase subunit beta (AccD). It depends on Zn(2+) as a cofactor.

The protein localises to the cytoplasm. It catalyses the reaction N(6)-carboxybiotinyl-L-lysyl-[protein] + acetyl-CoA = N(6)-biotinyl-L-lysyl-[protein] + malonyl-CoA. It functions in the pathway lipid metabolism; malonyl-CoA biosynthesis; malonyl-CoA from acetyl-CoA: step 1/1. Its function is as follows. Component of the acetyl coenzyme A carboxylase (ACC) complex. Biotin carboxylase (BC) catalyzes the carboxylation of biotin on its carrier protein (BCCP) and then the CO(2) group is transferred by the transcarboxylase to acetyl-CoA to form malonyl-CoA. The chain is Acetyl-coenzyme A carboxylase carboxyl transferase subunit beta 1 from Roseiflexus sp. (strain RS-1).